The chain runs to 324 residues: Galactosylgalactosylxylosylprotein 3-beta-glucuronosyltransferase 2 (324 aa).

Over 1–2 (MK) the chain is Cytoplasmic. A helical; Signal-anchor for type II membrane protein transmembrane segment spans residues 3-23 (SALCNRFFILLPWILIVIIML). Residues 24 to 324 (DVDPRRPAPQ…YHMDTVNIEV (301 aa)) lie on the Lumenal side of the membrane. The interval 34–78 (LTSRPYFSPHTVGCGGSRVPLRRSSPGRDAAEKRNESRPQLQPEP) is disordered. N-linked (GlcNAc...) asparagine glycosylation is present at N68. Residue D188 coordinates Mn(2+). The Proton acceptor role is filled by E274. N-linked (GlcNAc...) asparagine glycosylation occurs at N293.

The protein belongs to the glycosyltransferase 43 family. Homodimer. Mn(2+) serves as cofactor. Expressed in the cerebral cortex, cerebellum and whole brain.

The protein localises to the golgi apparatus membrane. It carries out the reaction 3-O-(beta-D-galactosyl-(1-&gt;3)-beta-D-galactosyl-(1-&gt;4)-beta-D-xylosyl)-L-seryl-[protein] + UDP-alpha-D-glucuronate = 3-O-(beta-D-GlcA-(1-&gt;3)-beta-D-Gal-(1-&gt;3)-beta-D-Gal-(1-&gt;4)-beta-D-Xyl)-L-seryl-[protein] + UDP + H(+). The protein operates within protein modification; protein glycosylation. In terms of biological role, involved in the biosynthesis of L2/HNK-1 carbohydrate epitope on both glycolipids and glycoproteins. Substrates include asialo-orosomucoid (ASOR), paragloboside (lacto-N-neotetraosylceramide), Gal-beta-1,4-GlcNAc-beta-1,3-Gal-beta-1,4-Glc-pyridylamine and Gal-beta-1,3-GlcNAc-beta-1,3-Gal-beta-1,4-Glc-pyridylamine. The protein is Galactosylgalactosylxylosylprotein 3-beta-glucuronosyltransferase 2 (B3gat2) of Rattus norvegicus (Rat).